A 163-amino-acid polypeptide reads, in one-letter code: UPF0478 protein SERP1299 (163 aa).

Residues 7–27 form a helical membrane-spanning segment; that stretch reads IAGIIAAIAFLILCIGIVVVL.

This sequence belongs to the UPF0478 family.

Its subcellular location is the cell membrane. The sequence is that of UPF0478 protein SERP1299 from Staphylococcus epidermidis (strain ATCC 35984 / DSM 28319 / BCRC 17069 / CCUG 31568 / BM 3577 / RP62A).